Reading from the N-terminus, the 392-residue chain is Metallophosphoesterase 1 (392 aa).

Residues 25–45 (KLAALVFAVVLFCEFLIYYLV) form a helical membrane-spanning segment. A divalent metal cation contacts are provided by Asp73, Asp115, Asn153, His246, His300, and His302. Residues 352–372 (DTVLATYCVAAGLLVVLILVH) form a helical membrane-spanning segment.

It belongs to the metallophosphoesterase superfamily. MPPE1 family. Interacts with GPI-anchor proteins (via the GPI portion). Interacts with TMED10. Mn(2+) is required as a cofactor.

It is found in the endoplasmic reticulum-Golgi intermediate compartment membrane. Its function is as follows. Metallophosphoesterase that catalyzes the removal of a side-chain ethanolamine-phosphate (EtNP) from the second mannose of the GPI-anchor protein intermediate. Participates in the glycan remodeling steps of GPI-anchor maturation to allow an efficient transport of GPI-anchor proteins from the endoplasmic reticulum to the Golgi. This chain is Metallophosphoesterase 1, found in Ailuropoda melanoleuca (Giant panda).